Consider the following 127-residue polypeptide: Mediator of RNA polymerase II transcription subunit 31 (127 aa).

Belongs to the Mediator complex subunit 31 family. As to quaternary structure, component of the Mediator complex.

The protein resides in the nucleus. Its function is as follows. Component of the Mediator complex, a coactivator involved in the regulated transcription of nearly all RNA polymerase II-dependent genes. Mediator functions as a bridge to convey information from gene-specific regulatory proteins to the basal RNA polymerase II transcription machinery. Mediator is recruited to promoters by direct interactions with regulatory proteins and serves as a scaffold for the assembly of a functional preinitiation complex with RNA polymerase II and the general transcription factors. The protein is Mediator of RNA polymerase II transcription subunit 31 (SOH1) of Eremothecium gossypii (strain ATCC 10895 / CBS 109.51 / FGSC 9923 / NRRL Y-1056) (Yeast).